The primary structure comprises 314 residues: Glycerol-3-phosphate dehydrogenase [NAD(P)+] (314 aa).

NADPH-binding residues include S14, F15, R35, and K108. K108 and G136 together coordinate sn-glycerol 3-phosphate. A140 provides a ligand contact to NADPH. K191, D247, S257, R258, and N259 together coordinate sn-glycerol 3-phosphate. K191 functions as the Proton acceptor in the catalytic mechanism. NADPH is bound at residue R258. NADPH is bound by residues L282 and E284.

The protein belongs to the NAD-dependent glycerol-3-phosphate dehydrogenase family.

The protein localises to the cytoplasm. It catalyses the reaction sn-glycerol 3-phosphate + NAD(+) = dihydroxyacetone phosphate + NADH + H(+). The catalysed reaction is sn-glycerol 3-phosphate + NADP(+) = dihydroxyacetone phosphate + NADPH + H(+). Its pathway is membrane lipid metabolism; glycerophospholipid metabolism. Its function is as follows. Catalyzes the reduction of the glycolytic intermediate dihydroxyacetone phosphate (DHAP) to sn-glycerol 3-phosphate (G3P), the key precursor for phospholipid synthesis. This chain is Glycerol-3-phosphate dehydrogenase [NAD(P)+], found in Rickettsia bellii (strain OSU 85-389).